We begin with the raw amino-acid sequence, 343 residues long: Protein RecA (343 aa).

Glycine 64 to threonine 71 provides a ligand contact to ATP.

The protein belongs to the RecA family.

The protein resides in the cytoplasm. Functionally, can catalyze the hydrolysis of ATP in the presence of single-stranded DNA, the ATP-dependent uptake of single-stranded DNA by duplex DNA, and the ATP-dependent hybridization of homologous single-stranded DNAs. It interacts with LexA causing its activation and leading to its autocatalytic cleavage. This Bacillus cereus (strain B4264) protein is Protein RecA.